We begin with the raw amino-acid sequence, 71 residues long: Protein SlyX homolog (71 aa).

It belongs to the SlyX family.

The polypeptide is Protein SlyX homolog (Rhodopseudomonas palustris (strain BisB5)).